A 348-amino-acid chain; its full sequence is Ketol-acid reductoisomerase (NADP(+)) (348 aa).

One can recognise a KARI N-terminal Rossmann domain in the interval 2–182 (AKTYYDHDAD…GCTRAGVLET (181 aa)). Residues 25-28 (YGSQ), S51, S53, and 83-86 (DTAQ) each bind NADP(+). Residue H108 is part of the active site. G134 provides a ligand contact to NADP(+). Residues 183-328 (TFKEETETDL…EKLRAAMPFL (146 aa)) form the KARI C-terminal knotted domain. Residues D191, E195, E227, and E231 each contribute to the Mg(2+) site. Substrate is bound at residue S252.

This sequence belongs to the ketol-acid reductoisomerase family. Mg(2+) is required as a cofactor.

It catalyses the reaction (2R)-2,3-dihydroxy-3-methylbutanoate + NADP(+) = (2S)-2-acetolactate + NADPH + H(+). It carries out the reaction (2R,3R)-2,3-dihydroxy-3-methylpentanoate + NADP(+) = (S)-2-ethyl-2-hydroxy-3-oxobutanoate + NADPH + H(+). Its pathway is amino-acid biosynthesis; L-isoleucine biosynthesis; L-isoleucine from 2-oxobutanoate: step 2/4. It participates in amino-acid biosynthesis; L-valine biosynthesis; L-valine from pyruvate: step 2/4. Involved in the biosynthesis of branched-chain amino acids (BCAA). Catalyzes an alkyl-migration followed by a ketol-acid reduction of (S)-2-acetolactate (S2AL) to yield (R)-2,3-dihydroxy-isovalerate. In the isomerase reaction, S2AL is rearranged via a Mg-dependent methyl migration to produce 3-hydroxy-3-methyl-2-ketobutyrate (HMKB). In the reductase reaction, this 2-ketoacid undergoes a metal-dependent reduction by NADPH to yield (R)-2,3-dihydroxy-isovalerate. The protein is Ketol-acid reductoisomerase (NADP(+)) of Acidobacterium capsulatum (strain ATCC 51196 / DSM 11244 / BCRC 80197 / JCM 7670 / NBRC 15755 / NCIMB 13165 / 161).